The following is a 255-amino-acid chain: Ornithine decarboxylase antizyme (255 aa).

It belongs to the ODC antizyme family. Interacts with ODC and thereby sterically blocks ODC homodimerization.

In terms of biological role, ornithine decarboxylase (ODC) antizyme protein that negatively regulates ODC activity and intracellular polyamine biosynthesis in response to increased intracellular polyamine levels. Binds to ODC monomers, inhibiting the assembly of the functional ODC homodimer, and targets the monomers for ubiquitin-independent proteolytic destruction by the 26S proteasome. This is Ornithine decarboxylase antizyme (OAZ1) from Candida glabrata (strain ATCC 2001 / BCRC 20586 / JCM 3761 / NBRC 0622 / NRRL Y-65 / CBS 138) (Yeast).